We begin with the raw amino-acid sequence, 229 residues long: Cytidylate kinase (229 aa).

ATP is bound at residue 12 to 20 (GPSGTGKSS).

It belongs to the cytidylate kinase family. Type 1 subfamily.

Its subcellular location is the cytoplasm. It carries out the reaction CMP + ATP = CDP + ADP. The catalysed reaction is dCMP + ATP = dCDP + ADP. The chain is Cytidylate kinase from Rhodococcus opacus (strain B4).